The sequence spans 297 residues: Cell division protein ZipA (297 aa).

Position 1 (M1) is a topological domain, periplasmic. Residues 2–22 (EIGLREWLILIGIIVIAGILF) traverse the membrane as a helical segment. Residues 23-297 (DGWRRMRGGK…FERRALTQKR (275 aa)) are Cytoplasmic-facing. The disordered stretch occupies residues 48 to 151 (DEEGGSAEVL…AAPASNSVKE (104 aa)). Residues 83-92 (ARDREREPKP) show a composition bias toward basic and acidic residues. Residues 124-133 (LFSDSDDDFA) show a composition bias toward acidic residues.

This sequence belongs to the ZipA family. As to quaternary structure, interacts with FtsZ via their C-terminal domains.

It is found in the cell inner membrane. Functionally, essential cell division protein that stabilizes the FtsZ protofilaments by cross-linking them and that serves as a cytoplasmic membrane anchor for the Z ring. Also required for the recruitment to the septal ring of downstream cell division proteins. The chain is Cell division protein ZipA from Pseudomonas putida (strain ATCC 47054 / DSM 6125 / CFBP 8728 / NCIMB 11950 / KT2440).